A 151-amino-acid polypeptide reads, in one-letter code: Small ribosomal subunit protein bS6 (151 aa).

Positions Glu94–Tyr151 are disordered. Residues Arg105–Asn144 show a composition bias toward basic and acidic residues.

This sequence belongs to the bacterial ribosomal protein bS6 family.

Binds together with bS18 to 16S ribosomal RNA. The chain is Small ribosomal subunit protein bS6 from Beijerinckia indica subsp. indica (strain ATCC 9039 / DSM 1715 / NCIMB 8712).